Here is a 291-residue protein sequence, read N- to C-terminus: Neugrin (291 aa).

The first 15 residues, 1–15 (MAVTLSLLLSGRVCA), serve as a signal peptide directing secretion. A disordered region spans residues 27–49 (VADPGPIGREPDPDSDWEPEERE). Residues 39 to 49 (PDSDWEPEERE) are compositionally biased toward acidic residues. Residue serine 41 is modified to Phosphoserine. Residue asparagine 158 is glycosylated (N-linked (GlcNAc...) asparagine). Residues 224 to 270 (VAAPLGHPRELQKYSSDSESPRRTGNGALPSDQKLEELKAEEPGNFS) form a disordered region. Positions 256 to 265 (QKLEELKAEE) are enriched in basic and acidic residues.

Belongs to the neugrin family. As to quaternary structure, forms a regulatory protein-RNA complex, consisting of RCC1L, NGRN, RPUSD3, RPUSD4, TRUB2, FASTKD2 and 16S mt-rRNA. Interacts with 16S mt-rRNA; this interaction is direct.

Its subcellular location is the nucleus. The protein localises to the secreted. It localises to the mitochondrion membrane. Functionally, plays an essential role in mitochondrial ribosome biogenesis. As a component of a functional protein-RNA module, consisting of RCC1L, NGRN, RPUSD3, RPUSD4, TRUB2, FASTKD2 and 16S mitochondrial ribosomal RNA (16S mt-rRNA), controls 16S mt-rRNA abundance and is required for intra-mitochondrial translation of core subunits of the oxidative phosphorylation system. This Pongo abelii (Sumatran orangutan) protein is Neugrin (NGRN).